Here is a 468-residue protein sequence, read N- to C-terminus: Putative BTB/POZ domain and WD-repeat protein R154 (468 aa).

The BTB domain occupies Ser14–Glu85. WD repeat units follow at residues His194 to Asn233, Asp354 to Ser398, and Leu401 to Thr440.

This sequence belongs to the mimivirus BTB/WD family.

In Acanthamoeba polyphaga (Amoeba), this protein is Putative BTB/POZ domain and WD-repeat protein R154.